Consider the following 252-residue polypeptide: Indole-3-glycerol phosphate synthase (252 aa).

Belongs to the TrpC family.

It catalyses the reaction 1-(2-carboxyphenylamino)-1-deoxy-D-ribulose 5-phosphate + H(+) = (1S,2R)-1-C-(indol-3-yl)glycerol 3-phosphate + CO2 + H2O. Its pathway is amino-acid biosynthesis; L-tryptophan biosynthesis; L-tryptophan from chorismate: step 4/5. The protein is Indole-3-glycerol phosphate synthase of Listeria monocytogenes serovar 1/2a (strain ATCC BAA-679 / EGD-e).